The chain runs to 392 residues: Phospho-N-acetylmuramoyl-pentapeptide-transferase (392 aa).

The next 10 membrane-spanning stretches (helical) occupy residues 28 to 48 (RALMAAMTALLIGLLAGPFVI), 76 to 96 (TMGGVLILLAIGISTLLWFDL), 100 to 120 (FVWIVLLVTLGFGAIGWVDDW), 137 to 157 (YLWQSVVGLIAALYLVFSISE), 193 to 213 (ISYPLGVFGFVILTYLVIVGS), 225 to 245 (GLAIMPVVMVGSSLGVFAYVT), 262 to 282 (SGELLIFCAAMAGSGLAFLWF), 289 to 309 (VFMGDVGALALGAALGTIAVI), 314 to 334 (IVLAIMGGIFVVEALSVMLQV), and 369 to 389 (QVVVRFWIITMLLCLVGLSTL).

This sequence belongs to the glycosyltransferase 4 family. MraY subfamily. Requires Mg(2+) as cofactor.

The protein localises to the cell inner membrane. It carries out the reaction UDP-N-acetyl-alpha-D-muramoyl-L-alanyl-gamma-D-glutamyl-meso-2,6-diaminopimeloyl-D-alanyl-D-alanine + di-trans,octa-cis-undecaprenyl phosphate = di-trans,octa-cis-undecaprenyl diphospho-N-acetyl-alpha-D-muramoyl-L-alanyl-D-glutamyl-meso-2,6-diaminopimeloyl-D-alanyl-D-alanine + UMP. The protein operates within cell wall biogenesis; peptidoglycan biosynthesis. Its function is as follows. Catalyzes the initial step of the lipid cycle reactions in the biosynthesis of the cell wall peptidoglycan: transfers peptidoglycan precursor phospho-MurNAc-pentapeptide from UDP-MurNAc-pentapeptide onto the lipid carrier undecaprenyl phosphate, yielding undecaprenyl-pyrophosphoryl-MurNAc-pentapeptide, known as lipid I. The chain is Phospho-N-acetylmuramoyl-pentapeptide-transferase from Polaromonas naphthalenivorans (strain CJ2).